Consider the following 326-residue polypeptide: Acyl-CoA-binding domain-containing protein 4 (326 aa).

The region spanning Cys-10 to Asp-99 is the ACB domain. An acyl-CoA is bound by residues Ile-21–Tyr-30, Tyr-41–Lys-45, Lys-67, and Tyr-86. 2 disordered regions span residues Val-147 to Pro-170 and Lys-223 to Gly-248. Residue Ser-164 is modified to Phosphoserine.

Binds medium- and long-chain acyl-CoA esters and may function as an intracellular carrier of acyl-CoA esters. In Rattus norvegicus (Rat), this protein is Acyl-CoA-binding domain-containing protein 4 (Acbd4).